Reading from the N-terminus, the 119-residue chain is Large ribosomal subunit protein bL20 (119 aa).

The protein belongs to the bacterial ribosomal protein bL20 family.

Its function is as follows. Binds directly to 23S ribosomal RNA and is necessary for the in vitro assembly process of the 50S ribosomal subunit. It is not involved in the protein synthesizing functions of that subunit. This chain is Large ribosomal subunit protein bL20, found in Shewanella frigidimarina (strain NCIMB 400).